The following is a 270-amino-acid chain: Large ribosomal subunit protein uL10 (270 aa).

Residues 234 to 270 are disordered; it reads VTELEAGKTRPKREGNRRQAMNGDEMDEDQSSDEDSD. Over residues 238 to 250 the composition is skewed to basic and acidic residues; sequence EAGKTRPKREGNR. The span at 257-270 shows a compositional bias: acidic residues; it reads DEMDEDQSSDEDSD.

It belongs to the universal ribosomal protein uL10 family. As to quaternary structure, associates with the pre-60S ribosomal particle.

The protein resides in the nucleus. It localises to the nucleolus. It is found in the cytoplasm. In terms of biological role, component of the ribosome assembly machinery. Nuclear paralog of the ribosomal protein P0, it binds pre-60S subunits at an early stage of assembly in the nucleolus, and is replaced by P0 in cytoplasmic pre-60S subunits and mature 80S ribosomes. In Chaetomium thermophilum (strain DSM 1495 / CBS 144.50 / IMI 039719) (Thermochaetoides thermophila), this protein is Large ribosomal subunit protein uL10.